The following is a 354-amino-acid chain: 3-dehydroquinate synthase (354 aa).

Residues D39, Y45, E68–K71, G100–D104, T124–T125, K136, K145, and F163–T166 each bind NAD(+). Positions 178, 242, and 256 each coordinate Zn(2+).

Belongs to the sugar phosphate cyclases superfamily. Dehydroquinate synthase family. NAD(+) serves as cofactor. Requires Co(2+) as cofactor. The cofactor is Zn(2+).

It localises to the cytoplasm. It carries out the reaction 7-phospho-2-dehydro-3-deoxy-D-arabino-heptonate = 3-dehydroquinate + phosphate. Its pathway is metabolic intermediate biosynthesis; chorismate biosynthesis; chorismate from D-erythrose 4-phosphate and phosphoenolpyruvate: step 2/7. In terms of biological role, catalyzes the conversion of 3-deoxy-D-arabino-heptulosonate 7-phosphate (DAHP) to dehydroquinate (DHQ). The polypeptide is 3-dehydroquinate synthase (Staphylococcus aureus (strain MRSA252)).